A 98-amino-acid polypeptide reads, in one-letter code: NADH-ubiquinone oxidoreductase chain 4L (98 aa).

The next 3 membrane-spanning stretches (helical) occupy residues 2 to 22 (PSISTNIILAFTAALTGMLVF), 29 to 49 (SLLCLEGMMLSMFILSTLTIM), and 61 to 81 (ILLLVFAACEAAIGLALLVMM).

The protein belongs to the complex I subunit 4L family. As to quaternary structure, core subunit of respiratory chain NADH dehydrogenase (Complex I) which is composed of 45 different subunits.

The protein localises to the mitochondrion inner membrane. The catalysed reaction is a ubiquinone + NADH + 5 H(+)(in) = a ubiquinol + NAD(+) + 4 H(+)(out). Its function is as follows. Core subunit of the mitochondrial membrane respiratory chain NADH dehydrogenase (Complex I) which catalyzes electron transfer from NADH through the respiratory chain, using ubiquinone as an electron acceptor. Part of the enzyme membrane arm which is embedded in the lipid bilayer and involved in proton translocation. This is NADH-ubiquinone oxidoreductase chain 4L (MT-ND4L) from Lepilemur seali (Seal's sportive lemur).